Here is a 242-residue protein sequence, read N- to C-terminus: Polycomb group RING finger protein 3 (242 aa).

The segment at 17–56 (CRLCSGYLIDATTVTECLHTFCRSCLVKYLEENNTCPTCR) adopts an RING-type zinc-finger fold. The tract at residues 115–149 (AKQHLDSHRNGETKADDSSNKEAAEEKPEEDNDYH) is disordered. Over residues 117–140 (QHLDSHRNGETKADDSSNKEAAEE) the composition is skewed to basic and acidic residues. Positions 132–242 (SSNKEAAEEK…LHYRPKMDLL (111 aa)) are interaction with BCORL1.

As to quaternary structure, component of a PRC1-like complex that contains PCGF3, RNF2 and RYBP. Interacts with CBX6, CBX7 and CBX8. Interacts with BCORL1.

The protein resides in the nucleus. It is found in the nucleoplasm. In terms of biological role, component of a Polycomb group (PcG) multiprotein PRC1-like complex, a complex class required to maintain the transcriptionally repressive state of many genes, including Hox genes, throughout development. PcG PRC1 complex acts via chromatin remodeling and modification of histones; it mediates monoubiquitination of histone H2A 'Lys-119', rendering chromatin heritably changed in its expressibility. Within the PRC1-like complex, regulates RNF2 ubiquitin ligase activity. Plays a redundant role with PCGF5 as part of a PRC1-like complex that mediates monoubiquitination of histone H2A 'Lys-119' on the X chromosome and is required for normal silencing of one copy of the X chromosome in XX females. This chain is Polycomb group RING finger protein 3 (PCGF3), found in Homo sapiens (Human).